The primary structure comprises 943 residues: Protein translocase subunit SecA (943 aa).

ATP contacts are provided by residues glutamine 90, 108-112 (GEGKT), and aspartate 509. The interval 535 to 562 (PDNEHKPPIPKQRNSKSKGGFSRKAGSN) is disordered.

This sequence belongs to the SecA family. Monomer and homodimer. Part of the essential Sec protein translocation apparatus which comprises SecA, SecYEG and auxiliary proteins SecDF. Other proteins may also be involved.

It is found in the cell inner membrane. The protein resides in the cellular thylakoid membrane. Its subcellular location is the cytoplasm. It carries out the reaction ATP + H2O + cellular proteinSide 1 = ADP + phosphate + cellular proteinSide 2.. Functionally, part of the Sec protein translocase complex. Interacts with the SecYEG preprotein conducting channel. Has a central role in coupling the hydrolysis of ATP to the transfer of proteins into and across the cell membrane, serving as an ATP-driven molecular motor driving the stepwise translocation of polypeptide chains across the membrane. In terms of biological role, probably participates in protein translocation into and across both the cytoplasmic and thylakoid membranes in cyanobacterial cells. The sequence is that of Protein translocase subunit SecA from Prochlorococcus marinus (strain AS9601).